The following is a 142-amino-acid chain: Bacilliredoxin ABC2448 (142 aa).

The protein belongs to the bacilliredoxin family.

This Shouchella clausii (strain KSM-K16) (Alkalihalobacillus clausii) protein is Bacilliredoxin ABC2448.